A 543-amino-acid chain; its full sequence is Chaperonin GroEL (543 aa).

ATP-binding positions include 30 to 33 (TLGP), Lys-51, 87 to 91 (DGTTT), Gly-415, 479 to 481 (NAA), and Asp-495.

This sequence belongs to the chaperonin (HSP60) family. In terms of assembly, forms a cylinder of 14 subunits composed of two heptameric rings stacked back-to-back. Interacts with the co-chaperonin GroES.

The protein localises to the cytoplasm. It carries out the reaction ATP + H2O + a folded polypeptide = ADP + phosphate + an unfolded polypeptide.. Together with its co-chaperonin GroES, plays an essential role in assisting protein folding. The GroEL-GroES system forms a nano-cage that allows encapsulation of the non-native substrate proteins and provides a physical environment optimized to promote and accelerate protein folding. The sequence is that of Chaperonin GroEL from Francisella philomiragia subsp. philomiragia (strain ATCC 25017 / CCUG 19701 / FSC 153 / O#319-036).